The chain runs to 298 residues: Putative enoyl-CoA reductase (298 aa).

Helical transmembrane passes span 162–182, 189–209, 229–249, and 254–274; these read CVYY…PYYT, LVNA…AVHV, ILFS…WVAF, and SMLT…EWAV.

It belongs to the steroid 5-alpha reductase family.

The protein localises to the membrane. Its pathway is lipid metabolism; fatty acid biosynthesis. Involved in the synthesis of fatty acids. This Trypanosoma brucei brucei (strain 927/4 GUTat10.1) protein is Putative enoyl-CoA reductase.